The sequence spans 388 residues: GTPase Obg (388 aa).

Residues Met1–Leu159 enclose the Obg domain. The 174-residue stretch at Ala160–Glu333 folds into the OBG-type G domain. Residues Gly166 to Ser173, Phe191 to Ile195, Asp213 to Gly216, Asn283 to Asp286, and Ser314 to Val316 contribute to the GTP site. The Mg(2+) site is built by Ser173 and Thr193. Residues Asn359–Asp380 form a disordered region. Acidic residues predominate over residues Ile364–Asp380.

It belongs to the TRAFAC class OBG-HflX-like GTPase superfamily. OBG GTPase family. In terms of assembly, monomer. It depends on Mg(2+) as a cofactor.

It is found in the cytoplasm. In terms of biological role, an essential GTPase which binds GTP, GDP and possibly (p)ppGpp with moderate affinity, with high nucleotide exchange rates and a fairly low GTP hydrolysis rate. Plays a role in control of the cell cycle, stress response, ribosome biogenesis and in those bacteria that undergo differentiation, in morphogenesis control. The polypeptide is GTPase Obg (Vibrio vulnificus (strain YJ016)).